The chain runs to 395 residues: Tyrosine--tRNA ligase 2 (395 aa).

The 'HIGH' region motif lies at 42-51 (PTAPDIHLGH). A 'KMSKS' region motif is present at residues 226–230 (KMSKS). K229 contacts ATP. The 61-residue stretch at 334-394 (TPVANLLKDA…GKRKFARITI (61 aa)) folds into the S4 RNA-binding domain.

It belongs to the class-I aminoacyl-tRNA synthetase family. TyrS type 2 subfamily. Homodimer.

The protein localises to the cytoplasm. The enzyme catalyses tRNA(Tyr) + L-tyrosine + ATP = L-tyrosyl-tRNA(Tyr) + AMP + diphosphate + H(+). In terms of biological role, catalyzes the attachment of tyrosine to tRNA(Tyr) in a two-step reaction: tyrosine is first activated by ATP to form Tyr-AMP and then transferred to the acceptor end of tRNA(Tyr). The chain is Tyrosine--tRNA ligase 2 from Vibrio parahaemolyticus serotype O3:K6 (strain RIMD 2210633).